The sequence spans 105 residues: Small ribosomal subunit protein uS10 (105 aa).

The protein belongs to the universal ribosomal protein uS10 family. In terms of assembly, part of the 30S ribosomal subunit.

Functionally, involved in the binding of tRNA to the ribosomes. The sequence is that of Small ribosomal subunit protein uS10 from Solidesulfovibrio magneticus (strain ATCC 700980 / DSM 13731 / RS-1) (Desulfovibrio magneticus).